Consider the following 757-residue polypeptide: Glutathione biosynthesis bifunctional protein GshAB (757 aa).

A glutamate--cysteine ligase region spans residues 1–337 (MKIQHIIHEN…LGKARLAEVA (337 aa)). An ATP-grasp domain is found at 494–753 (KKVLQKAGFN…LTQNVIKMLF (260 aa)). 521-580 (ALFENRAVVIKPKSTNYGLGITIFQQGVQNREDFAKALEIAFREDKEVMVEDYLVGTEYR) contacts ATP. Residues D702, E723, and N725 each coordinate Mg(2+). Positions 702, 723, and 725 each coordinate Mn(2+).

This sequence in the N-terminal section; belongs to the glutamate--cysteine ligase type 1 family. Type 2 subfamily. In terms of assembly, monomer. It depends on Mg(2+) as a cofactor. The cofactor is Mn(2+).

The catalysed reaction is L-cysteine + L-glutamate + ATP = gamma-L-glutamyl-L-cysteine + ADP + phosphate + H(+). It carries out the reaction gamma-L-glutamyl-L-cysteine + glycine + ATP = glutathione + ADP + phosphate + H(+). It participates in sulfur metabolism; glutathione biosynthesis; glutathione from L-cysteine and L-glutamate: step 1/2. It functions in the pathway sulfur metabolism; glutathione biosynthesis; glutathione from L-cysteine and L-glutamate: step 2/2. Synthesizes glutathione from L-glutamate and L-cysteine via gamma-L-glutamyl-L-cysteine. The protein is Glutathione biosynthesis bifunctional protein GshAB of Pasteurella multocida (strain Pm70).